The chain runs to 620 residues: Cryptochrome-1 (620 aa).

The Photolyase/cryptochrome alpha/beta domain maps to 3-132; it reads VNAVHWFRKG…EVIVRISHTL (130 aa). 3 short sequence motifs (LIR) span residues 50–54, 82–87, and 151–156; these read NRWRF, DVFPRL, and KRFQTL. S252 serves as a coordination point for FAD. 4 short sequence motifs (LIR) span residues 255-260, 271-276, 285-290, and 335-339; these read LRFGCL, DLYKKV, SLYGQL, and TGFPW. Q289 contributes to the FAD binding site. H355 is an FAD binding site. The short motif at 379-384 is the LIR 8 element; the sequence is KVFEEL. Position 387-389 (387-389) interacts with FAD; it reads DAD. Short sequence motifs (LIR) lie at residues 395–400, 411–416, 430–435, 486–491, and 492–497; these read GSWMWL, HCYCPV, RRYLPV, QIYQQL, and SRYRGL. A disordered region spans residues 593 to 620; the sequence is TGISAGKRPNPEEETQSVGPKVQRQSTN.

The protein belongs to the DNA photolyase class-1 family. In terms of assembly, component of the circadian core oscillator, which includes the CRY proteins, CLOCK or NPAS2, BMAL1 or BMAL2, CSNK1E, and the PER proteins. FAD is required as a cofactor. The cofactor is (6R)-5,10-methylene-5,6,7,8-tetrahydrofolate. In terms of tissue distribution, expressed in the retina.

Its subcellular location is the cytoplasm. It localises to the nucleus. Its function is as follows. Transcriptional repressor which forms a core component of the circadian clock. The circadian clock, an internal time-keeping system, regulates various physiological processes through the generation of approximately 24 hour circadian rhythms in gene expression, which are translated into rhythms in metabolism and behavior. It is derived from the Latin roots 'circa' (about) and 'diem' (day) and acts as an important regulator of a wide array of physiological functions including metabolism, sleep, body temperature, blood pressure, endocrine, immune, cardiovascular, and renal function. Consists of two major components: the central clock, residing in the suprachiasmatic nucleus (SCN) of the brain, and the peripheral clocks that are present in nearly every tissue and organ system. Both the central and peripheral clocks can be reset by environmental cues, also known as Zeitgebers (German for 'timegivers'). The predominant Zeitgeber for the central clock is light, which is sensed by retina and signals directly to the SCN. The central clock entrains the peripheral clocks through neuronal and hormonal signals, body temperature and feeding-related cues, aligning all clocks with the external light/dark cycle. Circadian rhythms allow an organism to achieve temporal homeostasis with its environment at the molecular level by regulating gene expression to create a peak of protein expression once every 24 hours to control when a particular physiological process is most active with respect to the solar day. Transcription and translation of core clock components (CLOCK, NPAS2, BMAL1, BMAL2, PER1, PER2, PER3, CRY1 and CRY2) plays a critical role in rhythm generation, whereas delays imposed by post-translational modifications (PTMs) are important for determining the period (tau) of the rhythms (tau refers to the period of a rhythm and is the length, in time, of one complete cycle). A diurnal rhythm is synchronized with the day/night cycle, while the ultradian and infradian rhythms have a period shorter and longer than 24 hours, respectively. Disruptions in the circadian rhythms contribute to the pathology of cardiovascular diseases, cancer, metabolic syndromes and aging. A transcription/translation feedback loop (TTFL) forms the core of the molecular circadian clock mechanism. Transcription factors, CLOCK or NPAS2 and BMAL1 or BMAL2, form the positive limb of the feedback loop, act in the form of a heterodimer and activate the transcription of core clock genes and clock-controlled genes (involved in key metabolic processes), harboring E-box elements (5'-CACGTG-3') within their promoters. The core clock genes: PER1/2/3 and CRY1/2 which are transcriptional repressors form the negative limb of the feedback loop and interact with the CLOCK|NPAS2-BMAL1|BMAL2 heterodimer inhibiting its activity and thereby negatively regulating their own expression. This heterodimer also activates nuclear receptors NR1D1/2 and RORA/B/G, which form a second feedback loop and which activate and repress BMAL1 transcription, respectively. CRY1 and CRY2 have redundant functions but also differential and selective contributions at least in defining the pace of the SCN circadian clock and its circadian transcriptional outputs. More potent transcriptional repressor in cerebellum and liver than CRY2, though more effective in lengthening the period of the SCN oscillator. On its side, CRY2 seems to play a critical role in tuning SCN circadian period by opposing the action of CRY1. With CRY2, is dispensable for circadian rhythm generation but necessary for the development of intercellular networks for rhythm synchrony. Capable of translocating circadian clock core proteins such as PER proteins to the nucleus. Interacts with CLOCK-BMAL1 independently of PER proteins and is found at CLOCK-BMAL1-bound sites, suggesting that CRY may act as a molecular gatekeeper to maintain CLOCK-BMAL1 in a poised and repressed state until the proper time for transcriptional activation. The chain is Cryptochrome-1 (CRY1) from Erithacus rubecula (European robin).